We begin with the raw amino-acid sequence, 301 residues long: MLKQMTVNSIIQYIEENLESKFINIDCLVLYSGFSRRYLQISFKEYVGMPIGTYIRVRRASRAAALLRLTRLTIIEISAKLFYDSQQTFTREFKKIFGYTPRQYRMIPFWSFKGLLGRREINCEYLQPRICYLKERNIIGQCFNFRDLVFYSGIDSKCRLGKLYDSLKKNTAITVSNRIPFHDKTNDIIARTVVWDRNKHFSDSEIKVDKGLYAYFFFNDTYDQYVHHMYNIYYNSLPIYNLNKRDGYDVEVIKRRNDNTIDCHYFLPIYCDDMEFYNEMQVYHNNIVKPEMSVTLGLPKS.

The 100-residue stretch at Asn8–Ile107 folds into the HTH araC/xylS-type domain. 2 consecutive DNA-binding regions (H-T-H motif) follow at residues Asp26–Val47 and Ile74–Phe97.

Positive regulator of F1 operon expression. The polypeptide is F1 operon positive regulatory protein (caf1R) (Yersinia pestis).